The chain runs to 179 residues: Large ribosomal subunit protein uL5 (179 aa).

The protein belongs to the universal ribosomal protein uL5 family. As to quaternary structure, part of the 50S ribosomal subunit; part of the 5S rRNA/L5/L18/L25 subcomplex. Contacts the 5S rRNA and the P site tRNA. Forms a bridge to the 30S subunit in the 70S ribosome.

Functionally, this is one of the proteins that bind and probably mediate the attachment of the 5S RNA into the large ribosomal subunit, where it forms part of the central protuberance. In the 70S ribosome it contacts protein S13 of the 30S subunit (bridge B1b), connecting the 2 subunits; this bridge is implicated in subunit movement. Contacts the P site tRNA; the 5S rRNA and some of its associated proteins might help stabilize positioning of ribosome-bound tRNAs. The chain is Large ribosomal subunit protein uL5 from Burkholderia mallei (strain NCTC 10247).